A 121-amino-acid chain; its full sequence is Small ribosomal subunit protein uS13 (121 aa).

The disordered stretch occupies residues arginine 93–lysine 121. Residues alanine 106–lysine 121 are compositionally biased toward basic residues.

It belongs to the universal ribosomal protein uS13 family. Part of the 30S ribosomal subunit. Forms a loose heterodimer with protein S19. Forms two bridges to the 50S subunit in the 70S ribosome.

Located at the top of the head of the 30S subunit, it contacts several helices of the 16S rRNA. In the 70S ribosome it contacts the 23S rRNA (bridge B1a) and protein L5 of the 50S subunit (bridge B1b), connecting the 2 subunits; these bridges are implicated in subunit movement. Contacts the tRNAs in the A and P-sites. In Bacillus subtilis (strain 168), this protein is Small ribosomal subunit protein uS13.